The chain runs to 219 residues: Ribose-5-phosphate isomerase A (219 aa).

Substrate contacts are provided by residues 28–31 (TGST), 81–84 (DGAD), and 94–97 (KGGG). Catalysis depends on E103, which acts as the Proton acceptor. Substrate is bound at residue K121.

Belongs to the ribose 5-phosphate isomerase family. As to quaternary structure, homodimer.

It catalyses the reaction aldehydo-D-ribose 5-phosphate = D-ribulose 5-phosphate. It functions in the pathway carbohydrate degradation; pentose phosphate pathway; D-ribose 5-phosphate from D-ribulose 5-phosphate (non-oxidative stage): step 1/1. Catalyzes the reversible conversion of ribose-5-phosphate to ribulose 5-phosphate. The sequence is that of Ribose-5-phosphate isomerase A from Shewanella oneidensis (strain ATCC 700550 / JCM 31522 / CIP 106686 / LMG 19005 / NCIMB 14063 / MR-1).